The primary structure comprises 124 residues: Large ribosomal subunit protein bL19 (124 aa).

It belongs to the bacterial ribosomal protein bL19 family.

Its function is as follows. This protein is located at the 30S-50S ribosomal subunit interface and may play a role in the structure and function of the aminoacyl-tRNA binding site. This chain is Large ribosomal subunit protein bL19, found in Orientia tsutsugamushi (strain Boryong) (Rickettsia tsutsugamushi).